A 502-amino-acid chain; its full sequence is 4,4'-diapophytoene desaturase (4,4'-diaponeurosporene-forming) (502 aa).

5-17 contributes to the FAD binding site; it reads VIGAGVTGLAAAA.

Belongs to the carotenoid/retinoid oxidoreductase family. CrtN subfamily.

It catalyses the reaction 15-cis-4,4'-diapophytoene + 3 FAD + 3 H(+) = all-trans-4,4'-diaponeurosporene + 3 FADH2. It functions in the pathway carotenoid biosynthesis; staphyloxanthin biosynthesis; staphyloxanthin from farnesyl diphosphate: step 2/5. Functionally, involved in the biosynthesis of the yellow-orange carotenoid staphyloxanthin, which plays a role in the virulence via its protective function against oxidative stress. Catalyzes three successive dehydrogenation reactions that lead to the introduction of three double bonds into 4,4'-diapophytoene (dehydrosqualene), with 4,4'-diapophytofluene and 4,4'-diapo-zeta-carotene as intermediates, and 4,4'-diaponeurosporene (the major deep-yellow pigment in staphylococci strains) as the end product. The chain is 4,4'-diapophytoene desaturase (4,4'-diaponeurosporene-forming) from Staphylococcus aureus (strain bovine RF122 / ET3-1).